Consider the following 338-residue polypeptide: Solute carrier family 35 member G5 (338 aa).

The segment at 1-28 is disordered; the sequence is MAGSHPYFNLPDSTHPSPPSGPPSLRWH. 9 helical membrane-spanning segments follow: residues 37 to 57, 67 to 87, 105 to 125, 160 to 180, 190 to 210, 221 to 241, 250 to 270, 281 to 301, and 310 to 330; these read TNGL…VGPL, LPSL…ALLL, CFCA…VQVV, CGLL…LWTL, ALGY…LLVY, TVAF…LFVL, LLSW…FTCV, LVCA…YYML, and IMGA…NLSC. Residues 49-174 form the EamA 1 domain; the sequence is LPAGFVGPLS…SILGLIIIVG (126 aa). The region spanning 272 to 325 is the EamA 2 domain; sequence YAVTKAHPALVCAVLHSEVVVALILQYYMLPETVAPSDIMGAGVVLGNITIIPA.

Belongs to the SLC35G solute transporter family.

The protein resides in the membrane. The chain is Solute carrier family 35 member G5 (SLC35G5) from Gorilla gorilla gorilla (Western lowland gorilla).